We begin with the raw amino-acid sequence, 103 residues long: Small ribosomal subunit protein uS10 (103 aa).

This sequence belongs to the universal ribosomal protein uS10 family. As to quaternary structure, part of the 30S ribosomal subunit.

Involved in the binding of tRNA to the ribosomes. The sequence is that of Small ribosomal subunit protein uS10 from Novosphingobium aromaticivorans (strain ATCC 700278 / DSM 12444 / CCUG 56034 / CIP 105152 / NBRC 16084 / F199).